Consider the following 174-residue polypeptide: Adenylate kinase (174 aa).

Residues 12-41 (STGDMLRAAIKAGTPLGLEAKKIIDEGGLV) are NMP. Residues Thr-13, Arg-18, 39-41 (GLV), 67-70 (GFPR), and Gln-74 contribute to the AMP site. The segment at 104-141 (GRRVHLASGRTYHVTYNPPKVEGKDDVTGEDLIQRDDD) is LID. Residues Arg-105 and 114–115 (TY) each bind ATP. Positions 138 and 149 each coordinate AMP.

This sequence belongs to the adenylate kinase family. In terms of assembly, monomer.

Its subcellular location is the cytoplasm. It catalyses the reaction AMP + ATP = 2 ADP. The protein operates within purine metabolism; AMP biosynthesis via salvage pathway; AMP from ADP: step 1/1. Functionally, catalyzes the reversible transfer of the terminal phosphate group between ATP and AMP. Plays an important role in cellular energy homeostasis and in adenine nucleotide metabolism. The chain is Adenylate kinase from Neisseria flavescens.